A 383-amino-acid polypeptide reads, in one-letter code: Probable butyrate kinase (383 aa).

The protein belongs to the acetokinase family.

It localises to the cytoplasm. The enzyme catalyses butanoate + ATP = butanoyl phosphate + ADP. The polypeptide is Probable butyrate kinase (Deinococcus radiodurans (strain ATCC 13939 / DSM 20539 / JCM 16871 / CCUG 27074 / LMG 4051 / NBRC 15346 / NCIMB 9279 / VKM B-1422 / R1)).